Reading from the N-terminus, the 23-residue chain is Basic phospholipase A2 homolog CTs-K49c (23 aa).

Contains 7 disulfide bonds. Expressed by the venom gland.

It is found in the secreted. Functionally, snake venom phospholipase A2 homolog that lacks catalytic activity. Shows myotoxic activities. Induces local edema a few hours after injection (5-10 ug) in the hind paw. This Trimeresurus stejnegeri (Chinese green tree viper) protein is Basic phospholipase A2 homolog CTs-K49c.